We begin with the raw amino-acid sequence, 751 residues long: Dachshund homolog 1 (751 aa).

The interval 1 to 178 (MAVPAALIPP…PSPVENTPQN (178 aa)) is disordered. 2 stretches are compositionally biased toward low complexity: residues 20–53 (ISTS…SGPT) and 61–74 (ASSA…TVTS). Gly residues-rich tracts occupy residues 75 to 97 (PGGG…GGGS) and 107 to 119 (SSGG…GGGA). Low complexity predominate over residues 120–156 (SSTPITASTGSSSSSSSSSSSSSSSSSSSSSSSSSSS). Positions 167 to 178 (STPSPVENTPQN) are enriched in polar residues. Residues 182-268 (KMVDLRGAKV…LISRKDFETL (87 aa)) are DACHbox-N. The interval 182 to 377 (KMVDLRGAKV…VGSSGGSWDK (196 aa)) is interaction with SIX6 and HDAC3. Disordered regions lie at residues 273-295 (TNAS…PENS), 351-393 (SNNQ…APVA), 467-525 (SPPS…RIPV), and 537-556 (MGLS…AGHD). Composition is skewed to polar residues over residues 285–294 (RTQSVTSPEN) and 351–369 (SNNQ…SSVG). Serine 484 is subject to Phosphoserine. Positions 499–517 (SHPSSHRSSSVSSSPARTE) are enriched in low complexity. Residues 609-689 (SSIETLLTNI…KAKRKLQEAL (81 aa)) are DACHbox-C. The interaction with SIN3A stretch occupies residues 620–699 (GLLKVAIDNA…EFETKRREQA (80 aa)). Positions 623–711 (KVAIDNARAQ…TLKQAASADS (89 aa)) form a coiled coil.

The protein belongs to the DACH/dachshund family. As to quaternary structure, interacts with SIX1, SIX6 and EYA3. Interacts with NCOR1 and HDAC3 through its N-terminus. Interacts with SIN3A through its C-terminus. Interacts with SMAD3 and SMAD4. As to expression, expressed at higher levels in adult kidney and lung, and at lower levels in brain and testis. Expressed in embryonal kidneys, eyes, cochleae and limb buds.

The protein localises to the nucleus. Functionally, transcription factor that is involved in regulation of organogenesis. Seems to be a regulator of SIX1, SIX6 and probably SIX5. Corepression of precursor cell proliferation in myoblasts by SIX1 is switched to coactivation through recruitment of EYA3 to the SIX1-DACH1 complex. Transcriptional activation also seems to involve association of CREBBP. Seems to act as a corepressor of SIX6 in regulating proliferation by directly repressing cyclin-dependent kinase inhibitors, including the p27Kip1 promoter. Inhibits TGF-beta signaling through interaction with SMAD4 and NCOR1. Binds to chromatin DNA via its DACHbox-N domain. The chain is Dachshund homolog 1 (Dach1) from Mus musculus (Mouse).